The chain runs to 354 residues: Yop proteins translocation protein U (354 aa).

The interval 1-20 (MSGEKTEQPTPKKIRDARKK) is disordered. 5 consecutive transmembrane segments (helical) span residues 30 to 50 (VSTALIVALSAMLMGLSDYYF), 79 to 99 (VLLEFFYLCFPLLTVAALMAI), 138 to 158 (VEFLKSILKVVLLSILIWIII), 163 to 183 (VTLLQLPTCGIECITPLLGQI), and 187 to 207 (LMVICTVGFVVISIADYAFEY).

It belongs to the type III secretion exporter family.

The protein resides in the cell membrane. Component of the yop secretion machinery. The sequence is that of Yop proteins translocation protein U (yscU) from Yersinia pestis.